A 216-amino-acid chain; its full sequence is Golgi to ER traffic protein 1 (216 aa).

Over Met-1 to Leu-9 the chain is Lumenal. A helical transmembrane segment spans residues Leu-10 to Ala-29. The Cytoplasmic portion of the chain corresponds to Thr-30–Ile-116. Residues Leu-54–Arg-105 are a coiled coil. The chain crosses the membrane as a helical span at residues Leu-117 to Phe-137. Residues Tyr-138–Gly-161 are Lumenal-facing. The helical transmembrane segment at Val-162–Val-178 threads the bilayer. Topologically, residues Ile-179–Asn-216 are cytoplasmic. A disordered region spans residues Pro-193–Asn-216. The span at Val-197–Val-209 shows a compositional bias: basic and acidic residues.

This sequence belongs to the WRB/GET1 family. Component of the Golgi to ER traffic (GET) complex, which is composed of GET1, GET2 and GET3. Within the complex, GET1 and GET2 form a heterotetramer which is stabilized by phosphatidylinositol binding and which binds to the GET3 homodimer.

It localises to the endoplasmic reticulum membrane. The protein resides in the golgi apparatus membrane. Required for the post-translational delivery of tail-anchored (TA) proteins to the endoplasmic reticulum. Together with GET2, acts as a membrane receptor for soluble GET3, which recognizes and selectively binds the transmembrane domain of TA proteins in the cytosol. The GET complex cooperates with the HDEL receptor ERD2 to mediate the ATP-dependent retrieval of resident ER proteins that contain a C-terminal H-D-E-L retention signal from the Golgi to the ER. This Debaryomyces hansenii (strain ATCC 36239 / CBS 767 / BCRC 21394 / JCM 1990 / NBRC 0083 / IGC 2968) (Yeast) protein is Golgi to ER traffic protein 1.